The chain runs to 550 residues: MVVIANKGALWAYYCKRLLNSVTYMMYPLIRKRTMKKLLLIVGLLLACSTVMRRIPLFHESFHLPSLDPRASTTTSQKFQEYRSDFLEKLETAEPPEDVIMFTAYGLGVHTHNLFMLACDMAKTSDSQIRFLLLTDGTILPEALYDYNRETVSTCPLSFLSYSTGVERLSKELILKDLLSLQFQQALLAISPSVIVTSEHSPLVMFQAINPYLNNNYYTHDTVDTNALEENSWITKLDMQSLQHFRTPRINVVLIVEDGTYKYLLNLMRDLGRDFKNSEEYPHLFIHLFMSENIPNLSSIRANWPQHRLFINLHFNQKDLNLIEVWTPPNDYTYALVVDLQPDSPPQLSSNLITWLKYKILLIYYHKSSSTYKNNIAAIVPSFDFSNEEAVILSQTINSNIVLFAPVVFQKFQEYMAVRLLNPNFELPESNGIEFAHEDSVLGHSKPSLTEFHAILGLYSLVISYNHFEGSLSNELRLDNLIAYFLKNPSVINFEEISEKNLYFTYDSKRLSFQGAKNESKKLYNSVTSCPYYGSLSSFPIRSIFCEPLM.

A signal peptide spans 1 to 53; the sequence is MVVIANKGALWAYYCKRLLNSVTYMMYPLIRKRTMKKLLLIVGLLLACSTVMR. N296 and N518 each carry an N-linked (GlcNAc...) asparagine glycan.

The protein resides in the endoplasmic reticulum. This is an uncharacterized protein from Schizosaccharomyces pombe (strain 972 / ATCC 24843) (Fission yeast).